The chain runs to 304 residues: Killer cell immunoglobulin-like receptor 2DS4 (304 aa).

The first 21 residues, M1 to P21, serve as a signal peptide directing secretion. Residues Q22 to H245 lie on the Extracellular side of the membrane. Ig-like C2-type domains follow at residues E42 to S107 and G142 to A205. A disulfide bridge connects residues C49 and C100. N-linked (GlcNAc...) asparagine glycans are attached at residues N67, N84, N144, N178, and N211. A disulfide bridge links C149 with C198. The disordered stretch occupies residues V220–G239. The helical transmembrane segment at V246 to L265 threads the bilayer. The Cytoplasmic segment spans residues H266–A304. A disordered region spans residues Q280 to A304.

This sequence belongs to the immunoglobulin superfamily. In terms of assembly, interacts with HLA-F; this interaction is direct.

It localises to the cell membrane. Receptor on natural killer (NK) cells for HLA-C alleles. Does not inhibit the activity of NK cells. The protein is Killer cell immunoglobulin-like receptor 2DS4 of Homo sapiens (Human).